A 583-amino-acid chain; its full sequence is MYDIKRLEAGQQKLQQAQQPLGLDLSGQQQQLTCSVITAPEHRANPNPSSISQSNPSEATHMTLLTLRRRRSLQRRACLLSILAAFVFGMALGVVVPMFGLPRHQDSPPDLPEEQIQMVAVEPLSSYRVEFIKETDELSAEQVFRNAFHLEQDKDAPDSMVVKKLDTNDGSIKEFHVQRTASGRYRKGPERRLSKKMPERVQPQETSRSPTTSPTNPTSEHQAGFIEEDVYWGPTVEQALPKGFAAKDQVSWERFVGEQGRVVRLEQGCGRMQNRMVVFADGTRACARYRQNTDQIQGEIFSYYLGQLLNISNLAPSAATVVDTSTPNWAAALGDITQAQWKERRPVVLTRWLSDLEPAGIPQPFQPLERHLNKHDVWNLTRHMQSERQAQSQPHGLLKRLGAASSPGSAHQSNAIEETGTGTETANGALVQRLIELAQWSDLIVFDYLIANLDRVVNNLYNFQWNADIMAAPAHNLARQSASQLLVFLDNESGLLHGYRLLKKYEAYHSLLLDNLCVFRRPTIDALRRLRAAGAGRRLRDLFERTTSAGVRDVLPSLPDKSVKILVERIDRVLGQVQKCQGS.

Residues 1-78 (MYDIKRLEAG…RRRSLQRRAC (78 aa)) lie on the Cytoplasmic side of the membrane. Residues 79 to 99 (LLSILAAFVFGMALGVVVPMF) form a helical; Signal-anchor for type II membrane protein membrane-spanning segment. Over 100-583 (GLPRHQDSPP…LGQVQKCQGS (484 aa)) the chain is Extracellular. Positions 179–222 (RTASGRYRKGPERRLSKKMPERVQPQETSRSPTTSPTNPTSEHQ) are disordered. Basic and acidic residues predominate over residues 187–199 (KGPERRLSKKMPE). The segment covering 206 to 219 (TSRSPTTSPTNPTS) has biased composition (low complexity). 2 N-linked (GlcNAc...) asparagine glycosylation sites follow: asparagine 310 and asparagine 379. The segment at 384-421 (MQSERQAQSQPHGLLKRLGAASSPGSAHQSNAIEETGT) is disordered. N-linked (GlcNAc...) asparagine glycosylation occurs at asparagine 491.

It belongs to the FJX1/FJ family. In terms of processing, proteolytically cleaved to yield a secreted protein. As to expression, in the eye disk, expressed in a gradient ahead of the morphogenetic furrow, high at the equator and low at the poles of the eye. In the leg disk, expressed in concentric rings, possibly corresponding to segmental boundaries. In the wing disk, expression is localized in the wing pouch; low in peripheral regions and high towards the center.

Its subcellular location is the golgi apparatus membrane. The protein localises to the secreted. The catalysed reaction is L-seryl-[protein] + ATP = O-phospho-L-seryl-[protein] + ADP + H(+). It carries out the reaction L-threonyl-[protein] + ATP = O-phospho-L-threonyl-[protein] + ADP + H(+). Its function is as follows. Golgi serine/threonine protein kinase required for intermediate growth in the proximal-distal axis. Phosphorylates specific residues within extracellular cadherin domains of Fat (ft) and Dachsous (ds) as they transit through the Golgi. Acts in ommatidial polarity determination as a secondary signal downstream of Notch, JAK/STAT and wingless. Also necessary for the initiation, up-regulation or maintenance of Notch ligand, Serrate (Ser) expression in legs, thereby participating in a feedback loop with N signaling. Sufficient for joint formation and growth in the leg. This Drosophila melanogaster (Fruit fly) protein is Extracellular serine/threonine protein kinase four-jointed.